The sequence spans 330 residues: Bifunctional pinoresinol-lariciresinol reductase 2 (330 aa).

NADP(+) contacts are provided by residues 28–34, R53, and K62; that span reads GGTGYLG. Residue K156 is the Proton acceptor of the active site. R160 is an NADP(+) binding site. H288 serves as a coordination point for substrate.

Belongs to the NmrA-type oxidoreductase family. Isoflavone reductase subfamily. As to quaternary structure, dimer. In terms of tissue distribution, expressed in leaves, stems, leaves and seeds.

It catalyses the reaction (+)-lariciresinol + NADP(+) = (+)-pinoresinol + NADPH + H(+). The enzyme catalyses (-)-secoisolariciresinol + NADP(+) = (+)-lariciresinol + NADPH + H(+). Its function is as follows. Reductase involved in lignan biosynthesis. Catalyzes the enantioselective conversion of (+)-pinoresinol into (+)-lariciresinol and of (+)-lariciresinol into (-)-secoisolariciresinol. Abstracts the 4R-hydride from the NADPH cofactor during catalysis. In Linum usitatissimum (Flax), this protein is Bifunctional pinoresinol-lariciresinol reductase 2 (PLR_Lu2).